A 459-amino-acid polypeptide reads, in one-letter code: Probable 3-ketoacyl-CoA synthase 14 (459 aa).

The first 25 residues, 1–25 (MFIAMADFKLLLLILILLSLFELDL), serve as a signal peptide directing secretion. A helical membrane pass occupies residues 32 to 52 (FFSPFPVKIGLLLISIFFYAY). Residues 52 to 334 (YSTTRSKPVY…FILFLVKSKL (283 aa)) form the FAE domain. Residues His268, His352, His356, His385, and Asn389 contribute to the active site.

It belongs to the thiolase-like superfamily. Chalcone/stilbene synthases family. As to expression, expressed in siliques.

The protein localises to the membrane. The enzyme catalyses a very-long-chain acyl-CoA + malonyl-CoA + H(+) = a very-long-chain 3-oxoacyl-CoA + CO2 + CoA. Its pathway is lipid metabolism; fatty acid biosynthesis. The sequence is that of Probable 3-ketoacyl-CoA synthase 14 from Arabidopsis thaliana (Mouse-ear cress).